The chain runs to 191 residues: Protein YceI (191 aa).

An N-terminal signal peptide occupies residues 1–22; it reads MKKNLLGFTLASLLFTTGSAVA.

This sequence belongs to the UPF0312 family. Type 1 subfamily.

The protein localises to the periplasm. In Salmonella newport (strain SL254), this protein is Protein YceI.